The primary structure comprises 195 residues: ATP-dependent Clp protease proteolytic subunit (195 aa).

Ser-98 serves as the catalytic Nucleophile. His-123 is a catalytic residue.

The protein belongs to the peptidase S14 family. In terms of assembly, fourteen ClpP subunits assemble into 2 heptameric rings which stack back to back to give a disk-like structure with a central cavity, resembling the structure of eukaryotic proteasomes.

Its subcellular location is the cytoplasm. The enzyme catalyses Hydrolysis of proteins to small peptides in the presence of ATP and magnesium. alpha-casein is the usual test substrate. In the absence of ATP, only oligopeptides shorter than five residues are hydrolyzed (such as succinyl-Leu-Tyr-|-NHMec, and Leu-Tyr-Leu-|-Tyr-Trp, in which cleavage of the -Tyr-|-Leu- and -Tyr-|-Trp bonds also occurs).. Functionally, cleaves peptides in various proteins in a process that requires ATP hydrolysis. Has a chymotrypsin-like activity. Plays a major role in the degradation of misfolded proteins. The chain is ATP-dependent Clp protease proteolytic subunit from Caldanaerobacter subterraneus subsp. tengcongensis (strain DSM 15242 / JCM 11007 / NBRC 100824 / MB4) (Thermoanaerobacter tengcongensis).